The chain runs to 38 residues: MKVYSSIKKRCEHCRIIKRKGKRFVICKVNPSHKQRQG.

Belongs to the bacterial ribosomal protein bL36 family.

The chain is Large ribosomal subunit protein bL36 from Prosthecochloris aestuarii (strain DSM 271 / SK 413).